The sequence spans 147 residues: MADNDNEDSIMDDLVEEYVETEEENFVDSEEESEDKDEIVESPSICEGFVQASSQTLVVIPDNERITSNVLTTFEATRLVAVRAQQLAINGSTMLKKKYSSPIDIAKQELFNRKIPLLVMRCIKVTPDGQKIVEIWNPREMGIPLLD.

A disordered region spans residues 20–39; the sequence is ETEEENFVDSEEESEDKDEI.

It belongs to the archaeal RpoK/eukaryotic RPB6 RNA polymerase subunit family. Part of the viral DNA-directed RNA polymerase that consists of 8 polII-like subunits (RPB1, RPB2, RPB3, RPB5, RPB6, RPB7, RPB9, RPB10), a capping enzyme and a termination factor.

It localises to the host cytoplasm. The protein resides in the virion. Its function is as follows. Component of the DNA-directed RNA polymerase (RNAP) that catalyzes the transcription in the cytoplasm of viral DNA into RNA using the four ribonucleoside triphosphates as substrates. In Ornithodoros (relapsing fever ticks), this protein is DNA-directed RNA polymerase subunit 6 homolog.